A 207-amino-acid polypeptide reads, in one-letter code: Large ribosomal subunit protein uL4 (207 aa).

Residues 45–57 (RQGTHSVKNRSTV) are compositionally biased toward polar residues. Positions 45-77 (RQGTHSVKNRSTVSGGGRKPWRQKGTGNARQGS) are disordered.

Belongs to the universal ribosomal protein uL4 family. As to quaternary structure, part of the 50S ribosomal subunit.

Its function is as follows. One of the primary rRNA binding proteins, this protein initially binds near the 5'-end of the 23S rRNA. It is important during the early stages of 50S assembly. It makes multiple contacts with different domains of the 23S rRNA in the assembled 50S subunit and ribosome. Forms part of the polypeptide exit tunnel. In Oenococcus oeni (strain ATCC BAA-331 / PSU-1), this protein is Large ribosomal subunit protein uL4.